A 318-amino-acid polypeptide reads, in one-letter code: Glutathione synthetase (318 aa).

In terms of domain architecture, ATP-grasp spans 128–313 (KLAILNFSRF…VAAMFADAVA (186 aa)). 154 to 210 (LKEHGDIIIKPLDGMGGMGIFRLTEKDPNIGSILETLMQLDSRTIMAQRYIPEIVHG) serves as a coordination point for ATP. 2 residues coordinate Mg(2+): E284 and N286.

This sequence belongs to the prokaryotic GSH synthase family. It depends on Mg(2+) as a cofactor. The cofactor is Mn(2+).

It catalyses the reaction gamma-L-glutamyl-L-cysteine + glycine + ATP = glutathione + ADP + phosphate + H(+). The protein operates within sulfur metabolism; glutathione biosynthesis; glutathione from L-cysteine and L-glutamate: step 2/2. The chain is Glutathione synthetase from Neisseria meningitidis serogroup A / serotype 4A (strain DSM 15465 / Z2491).